Here is a 750-residue protein sequence, read N- to C-terminus: uncharacterized protein (750 aa).

Transmembrane regions (helical) follow at residues 1–21 (MSIISSWLLVSIICLTTSIVT), 465–485 (YGANETGIATFIPGSSIISYL), and 586–606 (GMFGAAIYSWNFEGMSFVAVS).

It is found in the membrane. This is an uncharacterized protein from Saccharomyces cerevisiae (strain ATCC 204508 / S288c) (Baker's yeast).